The following is a 261-amino-acid chain: MAATNQPMIQLKDVSKIYDNGTVGLKDINLNIDKGEFVVVVGLSGAGKSTLLRSINRLQDVSKGDILIDGKSITSAKGKDLREIRRDIGMIFQSFNLVKRSSVLRNVLTGRVAYYPTWKTTFNLFTKEDKQKAYEALQRVDLADKVYTRADQLSGGQQQRVAIARVLTQNPKIILADEPTASLDPQTSRRVMHDLKMLNEEYGMTVVANLHSVELAKEFGDRVIGVRAGQIVYDGKMSETSQAVFDDIYNGGNGKKGEEDA.

One can recognise an ABC transporter domain in the interval 9–253; it reads IQLKDVSKIY…VFDDIYNGGN (245 aa). 42–49 is an ATP binding site; the sequence is GLSGAGKS.

The protein belongs to the ABC transporter superfamily. Phosphonates importer (TC 3.A.1.9.1) family. As to quaternary structure, the complex is composed of two ATP-binding proteins (PhnC), two transmembrane proteins (PhnE) and a solute-binding protein (PhnD).

The protein resides in the cell membrane. It carries out the reaction phosphonate(out) + ATP + H2O = phosphonate(in) + ADP + phosphate + H(+). Its function is as follows. Part of the ABC transporter complex PhnCDE involved in phosphonates import. Responsible for energy coupling to the transport system. In Lactobacillus gasseri (strain ATCC 33323 / DSM 20243 / BCRC 14619 / CIP 102991 / JCM 1131 / KCTC 3163 / NCIMB 11718 / NCTC 13722 / AM63), this protein is Phosphonates import ATP-binding protein PhnC.